Here is a 919-residue protein sequence, read N- to C-terminus: Translation initiation factor IF-2 (919 aa).

The segment covering 93-107 has biased composition (basic and acidic residues); that stretch reads MGKALPEEVPEKIAP. Disordered stretches follow at residues 93-145 and 158-279; these read MGKA…PAEP and KIQP…RKGE. A compositionally biased stretch (pro residues) spans 136-145; it reads LAPPEKPAEP. Residues 158–171 are compositionally biased toward basic and acidic residues; the sequence is KIQPPEKFAEEPLK. Over residues 172–193 the composition is skewed to low complexity; the sequence is KPAVIEPEKAAAAPKAVPGEAK. Basic and acidic residues-rich tracts occupy residues 194–203 and 256–279; these read PLPRTERVQE and GAPK…RKGE. In terms of domain architecture, tr-type G spans 420-589; that stretch reads PRAPVVTIMG…LLQADVLELK (170 aa). The segment at 429 to 436 is G1; the sequence is GHVDHGKT. 429–436 serves as a coordination point for GTP; that stretch reads GHVDHGKT. The interval 454–458 is G2; it reads GITQA. The G3 stretch occupies residues 475-478; sequence DTPG. Residues 475–479 and 529–532 each bind GTP; these read DTPGH and NKID. The interval 529 to 532 is G4; that stretch reads NKID. Residues 565 to 567 form a G5 region; it reads SAK.

Belongs to the TRAFAC class translation factor GTPase superfamily. Classic translation factor GTPase family. IF-2 subfamily.

Its subcellular location is the cytoplasm. In terms of biological role, one of the essential components for the initiation of protein synthesis. Protects formylmethionyl-tRNA from spontaneous hydrolysis and promotes its binding to the 30S ribosomal subunits. Also involved in the hydrolysis of GTP during the formation of the 70S ribosomal complex. This Syntrophus aciditrophicus (strain SB) protein is Translation initiation factor IF-2.